A 624-amino-acid chain; its full sequence is Ubiquilin-2 (624 aa).

Disordered stretches follow at residues 1–32 (MAEN…EPKI) and 106–141 (NRPQ…TNSN). Ala2 carries the post-translational modification N-acetylalanine. The segment covering 15–32 (RGPAAAQGSAAAPAEPKI) has biased composition (low complexity). One can recognise a Ubiquitin-like domain in the interval 33 to 107 (IKVTVKTPKE…VHLVIKSQNR (75 aa)). Residues 106-115 (NRPQGQSTQP) show a composition bias toward polar residues. Over residues 116-141 (SNAAGTNTTSASTPRSNSTPISTNSN) the composition is skewed to low complexity. STI1 domains lie at 178–206 (SPEM…QLIM) and 208–247 (NPQM…MQEM). Residues 287 to 349 (FGGNPFASVG…SGSGNSSSNA (63 aa)) form a disordered region. Over residues 294-304 (SVGSSSSSGEG) the composition is skewed to low complexity. Residues 316 to 325 (LPNPWAPPPA) are compositionally biased toward pro residues. Over residues 326 to 349 (TQSSATTSTTTSTGSGSGNSSSNA) the composition is skewed to low complexity. STI1 domains are found at residues 379 to 426 (NPQL…QEQM) and 430 to 462 (LPAF…QQGL). 12 repeat units span residues 491 to 493 (PVG), 494 to 496 (PVT), 497 to 499 (PIG), 500 to 502 (PIG), 503 to 505 (PIV), 506 to 508 (PFT), 509 to 511 (PIG), 512 to 514 (PIG), 515 to 517 (PIG), 518 to 520 (PTG), 521 to 523 (PAA), and 524 to 526 (PPG). The interval 491-526 (PVGPVTPIGPIGPIVPFTPIGPIGPIGPTGPAAPPG) is 12 X 3 AA tandem repeats of P-X-X. Residues 512 to 556 (PIGPIGPTGPAAPPGSTGSGGPTGPTVSSAAPSETTSPTSESGPN) form a disordered region. The span at 535 to 553 (GPTVSSAAPSETTSPTSES) shows a compositional bias: low complexity. Residues 581–621 (RFQQQLEQLNAMGFLNREANLQALIATGGDINAAIERLLGS) form the UBA domain.

Homodimer. Forms heterodimer with UBQLN1. Binds UBE3A and BTRC. Interacts with the 19S proteasome subunit. Interacts with C9orf72. Interacts with HNRNPA1 and HNRNPU. Found in a complex with UBQLN1 and MAP1LC3A/B/C. Interacts with EPS15, EPN1 and EPN2. Interacts with HERPUD1. Interacts with RAD23A. Interacts with TARDBP. Interacts (via C-terminus) with FAF2 (via N-terminus). Interacts with UBQLN4. Binds CD47. Post-translationally, degraded during macroautophagy.

It localises to the cytoplasm. The protein resides in the nucleus. It is found in the membrane. The protein localises to the cytoplasmic vesicle. Its subcellular location is the autophagosome. In terms of biological role, plays an important role in the regulation of different protein degradation mechanisms and pathways including ubiquitin-proteasome system (UPS), autophagy and the endoplasmic reticulum-associated protein degradation (ERAD) pathway. Mediates the proteasomal targeting of misfolded or accumulated proteins for degradation by binding (via UBA domain) to their polyubiquitin chains and by interacting (via ubiquitin-like domain) with the subunits of the proteasome. Plays a role in the ERAD pathway via its interaction with ER-localized proteins FAF2/UBXD8 and HERPUD1 and may form a link between the polyubiquitinated ERAD substrates and the proteasome. Involved in the regulation of macroautophagy and autophagosome formation; required for maturation of autophagy-related protein LC3 from the cytosolic form LC3-I to the membrane-bound form LC3-II and may assist in the maturation of autophagosomes to autolysosomes by mediating autophagosome-lysosome fusion. Negatively regulates the endocytosis of GPCR receptors: AVPR2 and ADRB2, by specifically reducing the rate at which receptor-arrestin complexes concentrate in clathrin-coated pits (CCPs). The sequence is that of Ubiquilin-2 (UBQLN2) from Homo sapiens (Human).